We begin with the raw amino-acid sequence, 316 residues long: Transaldolase (316 aa).

Lys-126 serves as the catalytic Schiff-base intermediate with substrate.

The protein belongs to the transaldolase family. Type 1 subfamily. As to quaternary structure, homodimer.

Its subcellular location is the cytoplasm. It carries out the reaction D-sedoheptulose 7-phosphate + D-glyceraldehyde 3-phosphate = D-erythrose 4-phosphate + beta-D-fructose 6-phosphate. Its pathway is carbohydrate degradation; pentose phosphate pathway; D-glyceraldehyde 3-phosphate and beta-D-fructose 6-phosphate from D-ribose 5-phosphate and D-xylulose 5-phosphate (non-oxidative stage): step 2/3. Its function is as follows. Transaldolase is important for the balance of metabolites in the pentose-phosphate pathway. This Methylibium petroleiphilum (strain ATCC BAA-1232 / LMG 22953 / PM1) protein is Transaldolase.